The chain runs to 442 residues: tRNA modification GTPase MnmE (442 aa).

Positions 27, 84, and 124 each coordinate (6S)-5-formyl-5,6,7,8-tetrahydrofolate. Residues G221–A366 form the TrmE-type G domain. Residues N231–S236, T250–T256, D275–G278, and N329–D332 contribute to the GTP site. 2 residues coordinate Mg(2+): S235 and T256. Residue K442 coordinates (6S)-5-formyl-5,6,7,8-tetrahydrofolate.

It belongs to the TRAFAC class TrmE-Era-EngA-EngB-Septin-like GTPase superfamily. TrmE GTPase family. In terms of assembly, homodimer. Heterotetramer of two MnmE and two MnmG subunits. The cofactor is K(+).

The protein localises to the cytoplasm. Functionally, exhibits a very high intrinsic GTPase hydrolysis rate. Involved in the addition of a carboxymethylaminomethyl (cmnm) group at the wobble position (U34) of certain tRNAs, forming tRNA-cmnm(5)s(2)U34. The polypeptide is tRNA modification GTPase MnmE (Chelativorans sp. (strain BNC1)).